Reading from the N-terminus, the 194-residue chain is MKIFFIDNFDSFSYNLVYELECLGYEVAVYQNDIDPSYLMDLMNEESKTPLLFISPGPGNPNSSGNLLKIIAMAKKKFPILGICLGLQALAQSYGAKIIRSKEIVHGKATAIALKKHAVFKGLGESMVVGRYHSLMASGLPKNLEVIAEHDNIPMAIVNEEDKILAYQFHPESIMTLQGRALLEQSVGFLEGLL.

In terms of domain architecture, Glutamine amidotransferase type-1 spans 2–194; that stretch reads KIFFIDNFDS…QSVGFLEGLL (193 aa). 57 to 59 is an L-glutamine binding site; it reads GPG. Catalysis depends on C84, which acts as the Nucleophile; for GATase activity. Residues Q88 and 134–135 contribute to the L-glutamine site; that span reads SL. Active-site for GATase activity residues include H170 and E172.

Heterotetramer consisting of two non-identical subunits: a beta subunit (TrpG) and a large alpha subunit (TrpE).

The enzyme catalyses chorismate + L-glutamine = anthranilate + pyruvate + L-glutamate + H(+). It functions in the pathway amino-acid biosynthesis; L-tryptophan biosynthesis; L-tryptophan from chorismate: step 1/5. Its function is as follows. Part of a heterotetrameric complex that catalyzes the two-step biosynthesis of anthranilate, an intermediate in the biosynthesis of L-tryptophan. In the first step, the glutamine-binding beta subunit (TrpG) of anthranilate synthase (AS) provides the glutamine amidotransferase activity which generates ammonia as a substrate that, along with chorismate, is used in the second step, catalyzed by the large alpha subunit of AS (TrpE) to produce anthranilate. In the absence of TrpG, TrpE can synthesize anthranilate directly from chorismate and high concentrations of ammonia. The sequence is that of Anthranilate synthase component 2 (trpG) from Helicobacter pylori (strain ATCC 700392 / 26695) (Campylobacter pylori).